Here is a 307-residue protein sequence, read N- to C-terminus: tRNA dimethylallyltransferase (307 aa).

9-16 (GATGTGKS) serves as a coordination point for ATP. 11–16 (TGTGKS) provides a ligand contact to substrate.

The protein belongs to the IPP transferase family. In terms of assembly, monomer. Mg(2+) serves as cofactor.

The enzyme catalyses adenosine(37) in tRNA + dimethylallyl diphosphate = N(6)-dimethylallyladenosine(37) in tRNA + diphosphate. Catalyzes the transfer of a dimethylallyl group onto the adenine at position 37 in tRNAs that read codons beginning with uridine, leading to the formation of N6-(dimethylallyl)adenosine (i(6)A). The chain is tRNA dimethylallyltransferase from Clavibacter sepedonicus (Clavibacter michiganensis subsp. sepedonicus).